Consider the following 392-residue polypeptide: Probable tRNA sulfurtransferase (392 aa).

One can recognise a THUMP domain in the interval Asp-61 to Ile-168. ATP contacts are provided by residues Leu-185–Leu-186, His-210–Phe-211, Arg-267, Gly-289, and Gln-298.

It belongs to the ThiI family.

The protein resides in the cytoplasm. It catalyses the reaction [ThiI sulfur-carrier protein]-S-sulfanyl-L-cysteine + a uridine in tRNA + 2 reduced [2Fe-2S]-[ferredoxin] + ATP + H(+) = [ThiI sulfur-carrier protein]-L-cysteine + a 4-thiouridine in tRNA + 2 oxidized [2Fe-2S]-[ferredoxin] + AMP + diphosphate. The catalysed reaction is [ThiS sulfur-carrier protein]-C-terminal Gly-Gly-AMP + S-sulfanyl-L-cysteinyl-[cysteine desulfurase] + AH2 = [ThiS sulfur-carrier protein]-C-terminal-Gly-aminoethanethioate + L-cysteinyl-[cysteine desulfurase] + A + AMP + 2 H(+). It functions in the pathway cofactor biosynthesis; thiamine diphosphate biosynthesis. Its function is as follows. Catalyzes the ATP-dependent transfer of a sulfur to tRNA to produce 4-thiouridine in position 8 of tRNAs, which functions as a near-UV photosensor. Also catalyzes the transfer of sulfur to the sulfur carrier protein ThiS, forming ThiS-thiocarboxylate. This is a step in the synthesis of thiazole, in the thiamine biosynthesis pathway. The sulfur is donated as persulfide by IscS. The sequence is that of Probable tRNA sulfurtransferase from Acetivibrio thermocellus (strain ATCC 27405 / DSM 1237 / JCM 9322 / NBRC 103400 / NCIMB 10682 / NRRL B-4536 / VPI 7372) (Clostridium thermocellum).